The following is a 199-amino-acid chain: NAD(P)H dehydrogenase (quinone) (199 aa).

The Flavodoxin-like domain occupies 4 to 190; it reads VLVLYYSAYG…AGARYQGKTI (187 aa). Residues 10 to 15 and 78 to 80 contribute to the FMN site; these read SAYGHI and TRF. An NAD(+)-binding site is contributed by Tyr-12. Trp-98 is a substrate binding site. FMN is bound by residues 113–119 and His-134; that span reads STATQHG.

This sequence belongs to the WrbA family. Requires FMN as cofactor.

The enzyme catalyses a quinone + NADH + H(+) = a quinol + NAD(+). It catalyses the reaction a quinone + NADPH + H(+) = a quinol + NADP(+). The protein is NAD(P)H dehydrogenase (quinone) of Rhodopseudomonas palustris (strain BisB5).